The primary structure comprises 92 residues: Small ribosomal subunit protein uS19 (92 aa).

It belongs to the universal ribosomal protein uS19 family.

Protein S19 forms a complex with S13 that binds strongly to the 16S ribosomal RNA. This Ruegeria pomeroyi (strain ATCC 700808 / DSM 15171 / DSS-3) (Silicibacter pomeroyi) protein is Small ribosomal subunit protein uS19.